The primary structure comprises 340 residues: Cytochrome c oxidase subunit 1 (340 aa).

A helical membrane pass occupies residues 18-38; it reads MCYLLVAILCGFLGYIYSLFI. 2 residues coordinate Ca(2+): Glu-41 and Gly-46. The chain crosses the membrane as a helical span at residues 42–62; it reads LSIIGCGVLFGDYQYYNVLVT. His-64 serves as a coordination point for Fe(II)-heme a. 7 consecutive transmembrane segments (helical) span residues 66 to 86, 100 to 120, 148 to 168, 186 to 206, 237 to 257, 279 to 299, and 305 to 325; these read LVMV…NYFV, LNNM…SGLL, FTVF…INLL, LFIW…PVLA, LFWF…FGLI, MILI…VVGM, and AYFG…LFNW. His-243 serves as a coordination point for Cu cation. Positions 243-247 form a cross-link, 1'-histidyl-3'-tyrosine (His-Tyr); the sequence is HPEVY. Tyr-247 contacts O2. Positions 292 and 293 each coordinate Cu cation.

Belongs to the heme-copper respiratory oxidase family. As to quaternary structure, component of the cytochrome c oxidase (complex IV, CIV), a multisubunit enzyme composed of a catalytic core of 3 subunits and several supernumerary subunits. The complex exists as a monomer or a dimer and forms supercomplexes (SCs) in the inner mitochondrial membrane with ubiquinol-cytochrome c oxidoreductase (cytochrome b-c1 complex, complex III, CIII). It depends on heme as a cofactor. Cu cation is required as a cofactor.

It localises to the mitochondrion inner membrane. It catalyses the reaction 4 Fe(II)-[cytochrome c] + O2 + 8 H(+)(in) = 4 Fe(III)-[cytochrome c] + 2 H2O + 4 H(+)(out). Its pathway is energy metabolism; oxidative phosphorylation. Its function is as follows. Component of the cytochrome c oxidase, the last enzyme in the mitochondrial electron transport chain which drives oxidative phosphorylation. The respiratory chain contains 3 multisubunit complexes succinate dehydrogenase (complex II, CII), ubiquinol-cytochrome c oxidoreductase (cytochrome b-c1 complex, complex III, CIII) and cytochrome c oxidase (complex IV, CIV), that cooperate to transfer electrons derived from NADH and succinate to molecular oxygen, creating an electrochemical gradient over the inner membrane that drives transmembrane transport and the ATP synthase. Cytochrome c oxidase is the component of the respiratory chain that catalyzes the reduction of oxygen to water. Electrons originating from reduced cytochrome c in the intermembrane space (IMS) are transferred via the dinuclear copper A center (CU(A)) of subunit 2 and heme A of subunit 1 to the active site in subunit 1, a binuclear center (BNC) formed by heme A3 and copper B (CU(B)). The BNC reduces molecular oxygen to 2 water molecules using 4 electrons from cytochrome c in the IMS and 4 protons from the mitochondrial matrix. The polypeptide is Cytochrome c oxidase subunit 1 (COI) (Strigomonas oncopelti (Parasitic flagellate)).